A 328-amino-acid polypeptide reads, in one-letter code: Surface antigen CRP170 (328 aa).

2 repeats span residues 38–102 (NAPC…CKKC) and 103–167 (NAPC…CKKC).

The chain is Surface antigen CRP170 from Giardia intestinalis (Giardia lamblia).